A 505-amino-acid polypeptide reads, in one-letter code: Histidine ammonia-lyase (505 aa).

Positions 141 to 143 (ASG) form a cross-link, 5-imidazolinone (Ala-Gly). Serine 142 is modified (2,3-didehydroalanine (Ser)).

This sequence belongs to the PAL/histidase family. Contains an active site 4-methylidene-imidazol-5-one (MIO), which is formed autocatalytically by cyclization and dehydration of residues Ala-Ser-Gly.

Its subcellular location is the cytoplasm. It catalyses the reaction L-histidine = trans-urocanate + NH4(+). The protein operates within amino-acid degradation; L-histidine degradation into L-glutamate; N-formimidoyl-L-glutamate from L-histidine: step 1/3. This is Histidine ammonia-lyase from Bacillus thuringiensis (strain Al Hakam).